The primary structure comprises 472 residues: Argininosuccinate lyase (472 aa).

It belongs to the lyase 1 family. Argininosuccinate lyase subfamily.

The protein localises to the cytoplasm. It catalyses the reaction 2-(N(omega)-L-arginino)succinate = fumarate + L-arginine. Its pathway is amino-acid biosynthesis; L-arginine biosynthesis; L-arginine from L-ornithine and carbamoyl phosphate: step 3/3. This is Argininosuccinate lyase from Maricaulis maris (strain MCS10) (Caulobacter maris).